The primary structure comprises 381 residues: Endophilin-A homolog (381 aa).

Positions 1–21 (MSLSGLRKQFNKANQYLSETM) are membrane-binding amphipathic helix. The BAR domain maps to 18–247 (SETMGAAEPT…LGHRIKDAAA (230 aa)). Positions 170 to 238 (CKKRQQRRDD…QCLENLQQQL (69 aa)) form a coiled coil. Positions 246–323 (AARPREEHVP…PPPLSQQQKP (78 aa)) are disordered. Residues 260 to 271 (ANESRTPRSSFR) are compositionally biased toward polar residues. Pro residues predominate over residues 305–317 (YQGPPPGGLPPPL). The SH3 domain occupies 320 to 379 (QQKPQCRALFDFDAQSEGELDFKEGTLIELVSQIDENWYEGRVNGKTGLFPVTYVQVLVP).

Belongs to the endophilin family. May form a homodimer (via the BAR domain). Expressed in neurons and posterior intestine.

It is found in the synapse. Its subcellular location is the cytoplasmic vesicle. It localises to the secretory vesicle. The protein resides in the synaptic vesicle. The protein localises to the membrane. Involved in synaptic vesicle (SV) recycling in neurons probably by regulating clathrin-mediated endocytosis. By controlling SV endocytosis, regulates the rate of excitatory postsynaptic currents (EPSCs) at neuromuscular junctions and thus locomotion. In a similar manner, involved in necrotic neuronal cell death induced by abnormal hyperactivation of ion channels. Plays a minor role in responses to mechanical stimuli. Plays a minor role in unc-26/synaptojanin localization to synapses. The chain is Endophilin-A homolog from Caenorhabditis elegans.